The following is a 466-amino-acid chain: Protein tilB homolog (466 aa).

LRR repeat units follow at residues 22–43 (SLEE…DKWC), 45–66 (DLKI…SKLK), 67–88 (KLEY…EGCE), and 89–110 (ELAK…KTLK). One can recognise an LRRCT domain in the interval 123–161 (NPCAFFDHYREFVVATLPQLKWLDGKGIEPSERIKALQE). The stretch at 178–204 (LKRAKLKEEAQRKHQEEDKNEDKRSNA) forms a coiled coil. Basic and acidic residues-rich tracts occupy residues 185-202 (EEAQ…DKRS) and 269-279 (EKQRKNQEKLS). Disordered regions lie at residues 185 to 206 (EEAQ…NAGF) and 269 to 288 (EKQR…VKPP). The 96-residue stretch at 301–396 (VNEPKIDFSL…GGQRAFTSVK (96 aa)) folds into the CS domain. Residues 418–466 (VDPSKHSFPDVTNIVQGKKHTPRRRPEPKIIPSEEDPTFEDNPEVPPLI) form a disordered region. A compositionally biased stretch (acidic residues) spans 450-460 (SEEDPTFEDNP).

Belongs to the tilB family. Interacts (via CS domain) with ZMYND10 (via C-terminus).

It localises to the cytoplasm. The protein resides in the cell projection. Its subcellular location is the cilium. In terms of biological role, may play a role in dynein arm assembly, hence essential for proper axoneme building for cilia motility. The protein is Protein tilB homolog (LRCC6) of Macaca fascicularis (Crab-eating macaque).